The primary structure comprises 1264 residues: MSTLYVSPHPDAFPSLRALIAARYGEAGEGPGWGGAHPRICLQPPPTSRTPFPPPRLPALEQGPGGLWVWGATAVAQLLWPAGLGGPGGSRAAVLVQQWVSYADTELIPAACGATLPALGLRSSAQDPQAVLGALGRALSPLEEWLRLHTYLAGEAPTLADLAAVTALLLPFRYVLDPPARRIWNNVTRWFVTCVRQPEFRAVLGEVVLYSGARPLSHQPGPEAPALPKTAAQLKKEAKKREKLEKFQQKQKIQQQQPPPGEKKPKPEKREKRDPGVITYDLPTPPGEKKDVSGPMPDSYSPRYVEAAWYPWWEQQGFFKPEYGRPNVSAANPRGVFMMCIPPPNVTGSLHLGHALTNAIQDSLTRWHRMRGETTLWNPGCDHAGIATQVVVEKKLWREQGLSRHQLGREAFLQEVWKWKEEKGDRIYHQLKKLGSSLDWDRACFTMDPKLSAAVTEAFVRLHEEGIIYRSTRLVNWSCTLNSAISDIEVDKKELTGRTLLSVPGYKEKVEFGVLVSFAYKVQGSDSDEEVVVATTRIETMLGDVAVAVHPKDTRYQHLKGKNVIHPFLSRSLPIVFDEFVDMDFGTGAVKITPAHDQNDYEVGQRHGLEAISIMDSRGALINVPPPFLGLPRFEARKAVLVALKERGLFRGIEDNPMVVPLCNRSKDVVEPLLRPQWYVRCGEMAQAASAAVTRGDLRILPEAHQRTWHAWMDNIREWCISRQLWWGHRIPAYFVTVSDPAVPPGEDPDGRYWVSGRNEAEAREKAAKEFGVSPDKISLQQDEDVLDTWFSSGLFPLSILGWPNQSEDLSVFYPGTLLETGHDILFFWVARMVMLGLKLTGRLPFREVYLHAIVRDAHGRKMSKSLGNVIDPLDVIYGISLQGLHNQLLNSNLDPSEVEKAKEGQKADFPAGIPECGTDALRFGLCAYMSQGRDINLDVNRILGYRHFCNKLWNATKFALRGLGKGFVPSPTSQPGGHESLVDRWIRSRLTEAVRLSNQGFQAYDFPAVTTAQYSFWLYELCDVYLECLKPVLNGVDQVAAECARQTLYTCLDVGLRLLSPFMPFVTEELFQRLPRRMPQAPPSLCVTPYPEPSECSWKDPEAEAALELALSITRAVRSLRADYNLTRIRPDCFLEVADEATGALASAVSGYVQALASAGVVAVLALGAPAPQGCAVALASDRCSIHLQLQGLVDPARELGKLQAKRVEAQRQAQRLRERRAASGYPVKVPLEVQEADEAKLQQTEAELRKVDEAIALFQKML.

At S2 the chain carries N-acetylserine. The region spanning 89–219 is the GST C-terminal domain; the sequence is GSRAAVLVQQ…YSGARPLSHQ (131 aa). Residues 217-296 are disordered; the sequence is SHQPGPEAPA…GEKKDVSGPM (80 aa). Basic and acidic residues-rich tracts occupy residues 234–248 and 261–275; these read LKKE…EKFQ and GEKK…KRDP. The 'HIGH' region signature appears at 344–354; it reads PNVTGSLHLGH. Phosphoserine is present on residues S437 and S527. K645 carries the N6-acetyllysine modification. The 'KMSKS' region motif lies at 862 to 866; the sequence is KMSKS. Position 865 (K865) interacts with ATP.

This sequence belongs to the class-I aminoacyl-tRNA synthetase family. Forms high-molecular-mass aggregates with elongation factor 1.

The catalysed reaction is tRNA(Val) + L-valine + ATP = L-valyl-tRNA(Val) + AMP + diphosphate. Can be regulated by protein kinase C-dependent phosphorylation. Functionally, catalyzes the attachment of valine to tRNA(Val). The polypeptide is Valine--tRNA ligase (Homo sapiens (Human)).